The primary structure comprises 275 residues: Autophagy protein 5 (275 aa).

Met1 carries the N-acetylmethionine modification. Lys130 is covalently cross-linked (Glycyl lysine isopeptide (Lys-Gly) (interchain with G-Cter in ATG12)).

The protein belongs to the ATG5 family. In terms of assembly, forms a conjugate with ATG12. Part of the minor complex composed of 4 sets of ATG12-ATG5 and ATG16L1 (400 kDa); this complex interacts with ATG3 leading to disruption of ATG7 interaction and promotion of ATG8-like proteins lipidation. Forms an 800-kDa complex composed of ATG12-ATG5 and ATG16L2. The ATG12-ATG5 conjugate interacts with RAB33A; this interaction is bridged by ATG16L1 and promotes ATG12-ATG5-ATG16L1 complex recruitment to phagophores. Interacts with TECPR1; the interaction is direct and does not take place when ATG16L1 is associated with the ATG5-ATG12 conjugate. Interacts with DHX58/RIG-1, IFIH1/MDA5 and MAVS/IPS-1 in monomeric form as well as in ATG12-ATG5 conjugate form. The interaction with MAVS is further enhanced upon vesicular stomatitis virus (VSV) infection. Interacts with ATG3. Interacts with ATG7 and ATG10. Interacts with FADD. Interacts with Bassoon/BSN; this interaction is important for the regulation of presynaptic autophagy. Interacts with ATG16L2. Conjugated to ATG12; which is essential for autophagy, but is not required for association with isolation membrane. In terms of processing, acetylated by EP300.

It is found in the cytoplasm. The protein localises to the preautophagosomal structure membrane. Involved in autophagic vesicle formation. Conjugation with ATG12, through a ubiquitin-like conjugating system involving ATG7 as an E1-like activating enzyme and ATG10 as an E2-like conjugating enzyme, is essential for its function. The ATG12-ATG5 conjugate acts as an E3-like enzyme which is required for lipidation of ATG8 family proteins and their association to the vesicle membranes. Involved in mitochondrial quality control after oxidative damage, and in subsequent cellular longevity. Plays a critical role in multiple aspects of lymphocyte development and is essential for both B and T lymphocyte survival and proliferation. Required for optimal processing and presentation of antigens for MHC II. Involved in the maintenance of axon morphology and membrane structures, as well as in normal adipocyte differentiation. Promotes primary ciliogenesis through removal of OFD1 from centriolar satellites and degradation of IFT20 via the autophagic pathway. As part of the ATG8 conjugation system with ATG12 and ATG16L1, required for recruitment of LRRK2 to stressed lysosomes and induction of LRRK2 kinase activity in response to lysosomal stress. Functionally, may play an important role in the apoptotic process, possibly within the modified cytoskeleton. Its expression is a relatively late event in the apoptotic process, occurring downstream of caspase activity. Plays a crucial role in IFN-gamma-induced autophagic cell death by interacting with FADD. This is Autophagy protein 5 from Pongo abelii (Sumatran orangutan).